A 137-amino-acid polypeptide reads, in one-letter code: MPNFAGTWKMKSSENFDELLRALGVNAMLRKVAVAAASKPHVEIRQDGDQFYIKTSTTVRTTEINFQVGESFQEETVDGRKCRSLATWENENKIYCKQTLIEGEGPKTYWTRELVNDELILTFGADDVVCTRIYVRE.

The Nuclear localization signal signature appears at 21 to 31; the sequence is RALGVNAMLRK. 132 to 134 serves as a coordination point for all-trans-retinoate; sequence RIY.

This sequence belongs to the calycin superfamily. Fatty-acid binding protein (FABP) family.

Its subcellular location is the cytoplasm. Its function is as follows. Cytosolic CRABPs may regulate the access of retinoic acid to the nuclear retinoic acid receptors. This chain is Cellular retinoic acid-binding protein 1 (CRABP1), found in Pelodiscus sinensis (Chinese softshell turtle).